Consider the following 276-residue polypeptide: Molybdenum storage protein subunit alpha (276 aa).

As to quaternary structure, octamer consisting of 4 alpha and 4 beta chains.

Its subcellular location is the cytoplasm. In terms of biological role, intracellular storage of molybdenum. Binds polyoxomolybdates. Can bind at least 90 molybdenum atoms per protein molecule. The polypeptide is Molybdenum storage protein subunit alpha (Azotobacter vinelandii (strain DJ / ATCC BAA-1303)).